Reading from the N-terminus, the 466-residue chain is Argininosuccinate lyase (466 aa).

It belongs to the lyase 1 family. Argininosuccinate lyase subfamily.

The protein localises to the cytoplasm. It catalyses the reaction 2-(N(omega)-L-arginino)succinate = fumarate + L-arginine. Its pathway is amino-acid biosynthesis; L-arginine biosynthesis; L-arginine from L-ornithine and carbamoyl phosphate: step 3/3. The protein is Argininosuccinate lyase of Ehrlichia ruminantium (strain Gardel).